The sequence spans 213 residues: Small ribosomal subunit protein uS3 (213 aa).

The 69-residue stretch at 38 to 106 (IRAFVKKLLY…EFSLEVNEIR (69 aa)) folds into the KH type-2 domain.

This sequence belongs to the universal ribosomal protein uS3 family. Part of the 30S ribosomal subunit. Forms a tight complex with proteins S10 and S14.

In terms of biological role, binds the lower part of the 30S subunit head. Binds mRNA in the 70S ribosome, positioning it for translation. This Desulfovibrio desulfuricans (strain ATCC 27774 / DSM 6949 / MB) protein is Small ribosomal subunit protein uS3.